A 279-amino-acid polypeptide reads, in one-letter code: Prephenate dehydratase (279 aa).

Positions 2–178 (KIAYLGPRGS…NSTRFWLLGK (177 aa)) constitute a Prephenate dehydratase domain. The ACT domain occupies 194 to 272 (LALTLPDNLP…VNVRLLGNYS (79 aa)).

It catalyses the reaction prephenate + H(+) = 3-phenylpyruvate + CO2 + H2O. Its pathway is amino-acid biosynthesis; L-phenylalanine biosynthesis; phenylpyruvate from prephenate: step 1/1. The protein is Prephenate dehydratase (pheA) of Lactococcus lactis subsp. cremoris (strain MG1363).